The sequence spans 315 residues: Serine/threonine-protein phosphatase PP2A catalytic subunit 3 (315 aa).

Aspartate 62, histidine 64, aspartate 90, and asparagine 122 together coordinate Mn(2+). The active-site Proton donor is the histidine 123. Positions 172 and 247 each coordinate Mn(2+). The tract at residues 294–315 (QFEPAPRENEPHTTRRVPDYFL) is disordered. Positions 298 to 315 (APRENEPHTTRRVPDYFL) are enriched in basic and acidic residues. Leucine 315 bears the Leucine methyl ester mark.

Belongs to the PPP phosphatase family. PP-2A subfamily. Requires Mn(2+) as cofactor. Reversibly methyl esterified on Leu-315 by leucine carboxyl methyltransferase 1 (PPM1) and protein phosphatase methylesterase 1 (PPE1). Carboxyl methylation influences the affinity of the catalytic subunit for the different regulatory subunits, thereby modulating the PP2A holoenzyme's substrate specificity, enzyme activity and cellular localization.

The enzyme catalyses O-phospho-L-seryl-[protein] + H2O = L-seryl-[protein] + phosphate. It carries out the reaction O-phospho-L-threonyl-[protein] + H2O = L-threonyl-[protein] + phosphate. The sequence is that of Serine/threonine-protein phosphatase PP2A catalytic subunit 3 (Ppn3) from Paramecium tetraurelia.